We begin with the raw amino-acid sequence, 705 residues long: MKYKKLSVAVAAFAFAAVSAQNSNSLKYPETKKVNHTDTYFGNQVSDPYRWLEDDRAEDTKAWVQQEVKFTQDYLAQIPFRGQIKKQLLDIWNYEKISAPFKKGKYTYFYKNDGLQAQSVLYRKDASGKTEVFLDPNKFSDKGTTSLANLSFNKKGTLVAYSISEGGSDWNKIIILDAETKKQIDETLLDVKFSGISWLGDEGFFYSSYDKPKDGSVLSGMTDKHKVYFHKLGTKQSQDELIIGGDKFPRRYLSGYVTEDQRYLVVSAANATNGNELYIKDLKNKTDFIPIITGFESNVGLVDTDGDTLFLHTDKNAPNMRMVKTTIQNPKPETWKDVIAETSEPMRVNSGGGYFFATYMKDALSQIKQYDKTGKLVREIKLPGSGTAGGFGGEKTEKELYYSFTNYITPPTIFKFSIDSGKSEVYQKPKVKFNPENYVSEQVFYTSADGTKIPMMISNKKGLKKDGKNPTILYSYGGFNISLQPAFSVVNAIWMENGGIYAVPNIRGGGEYGKKWHDAGTKQQKKNVFNDFIAAGEYLQKNGYTSKDYMALSGRSNGGLLVGATMTMRPDLAKVAFPGVGVLDMLRYNKFTAGAGWAYDYGTAEDSKEMFEYLKSYSPVHNVKAGTCYPSTMVITSDHDDRVVPAHSFKFGAELQAKQACKNPVLIRIETNAGHGAGRSTEQVVMENADLLSFALYEMGIKNLK.

A signal peptide spans 1–20; the sequence is MKYKKLSVAVAAFAFAAVSA. Active-site charge relay system residues include Ser556 and His675.

Belongs to the peptidase S9A family. In terms of assembly, monomer.

The protein localises to the periplasm. The enzyme catalyses Hydrolysis of Pro-|-Xaa &gt;&gt; Ala-|-Xaa in oligopeptides.. In terms of biological role, cleaves peptide bonds on the C-terminal side of prolyl residues within peptides that are up to approximately 30 amino acids long. Has an absolute requirement for an X-Pro bond in the trans configuration immediately preceding the Pro-Y scissible bond. This is Prolyl endopeptidase from Elizabethkingia miricola (Chryseobacterium miricola).